The primary structure comprises 318 residues: MTSAYDKLHSTLDVKAFGRVAVLYGGKSAEREVSLKSGAAVIDALSTAGVDVVAIDVGDDLLARLQSEKIDRAFIILHGRGGEDGSMQGLLECLGIPYTGSGILASALAMDKLRTKQVWQSLGIPTPRHAVLASESDCLQASTELGFPLIVKPAHEGSSIGMAKVNSTQELVAAWQDAAKYDSQVLVEQWIHGPEFTIAVLRGQVLPPIALGTPHVFYDYDAKYIVNDTQYRIPCGLDSVKEQELIDLTARACDAIGIEGWGRLDVMQDEQGRFWLLEVNTAPGMTDHSLVPMAARAAGLDFQQLVLAILAESVATRG.

Residues lysine 116–alanine 311 enclose the ATP-grasp domain. Serine 142 to threonine 197 is an ATP binding site. Residues aspartate 265, glutamate 278, and asparagine 280 each contribute to the Mg(2+) site.

It belongs to the D-alanine--D-alanine ligase family. It depends on Mg(2+) as a cofactor. Mn(2+) serves as cofactor.

Its subcellular location is the cytoplasm. The catalysed reaction is 2 D-alanine + ATP = D-alanyl-D-alanine + ADP + phosphate + H(+). It participates in cell wall biogenesis; peptidoglycan biosynthesis. In terms of biological role, cell wall formation. The chain is D-alanine--D-alanine ligase B from Pseudomonas putida (strain ATCC 47054 / DSM 6125 / CFBP 8728 / NCIMB 11950 / KT2440).